We begin with the raw amino-acid sequence, 828 residues long: Glycerol-3-phosphate acyltransferase (828 aa).

The short motif at 309-314 (CHRSHI) is the HXXXXD motif element.

Belongs to the GPAT/DAPAT family.

It localises to the cell inner membrane. The enzyme catalyses sn-glycerol 3-phosphate + an acyl-CoA = a 1-acyl-sn-glycero-3-phosphate + CoA. It participates in phospholipid metabolism; CDP-diacylglycerol biosynthesis; CDP-diacylglycerol from sn-glycerol 3-phosphate: step 1/3. The sequence is that of Glycerol-3-phosphate acyltransferase from Pseudomonas putida (strain W619).